The primary structure comprises 285 residues: Protease HtpX homolog (285 aa).

2 helical membrane-spanning segments follow: residues 7–27 (TAML…MIGG) and 30–50 (GMTI…WFSD). His131 is a Zn(2+) binding site. Residue Glu132 is part of the active site. His135 serves as a coordination point for Zn(2+). 2 helical membrane-spanning segments follow: residues 146-166 (ISAT…FFGG) and 177-197 (IAGI…QMAI). Glu202 contacts Zn(2+).

This sequence belongs to the peptidase M48B family. Zn(2+) is required as a cofactor.

It localises to the cell inner membrane. The sequence is that of Protease HtpX homolog from Burkholderia thailandensis (strain ATCC 700388 / DSM 13276 / CCUG 48851 / CIP 106301 / E264).